A 55-amino-acid chain; its full sequence is MAQHQGGKGNFAEDPKRASEAGKKGGQASGGNFKNDPQRASEAGKKGGQRSHGGN.

Positions 1–55 (MAQHQGGKGNFAEDPKRASEAGKKGGQASGGNFKNDPQRASEAGKKGGQRSHGGN) are disordered. Basic and acidic residues-rich tracts occupy residues 11-23 (FAED…EAGK) and 36-45 (DPQRASEAGK).

It belongs to the con-10 family.

May be involved in the regulation of the production of pyocyanine, one of the major virulence factors secreted by P.aeruginosa, and other virulence factors. In Pseudomonas aeruginosa (strain ATCC 15692 / DSM 22644 / CIP 104116 / JCM 14847 / LMG 12228 / 1C / PRS 101 / PAO1), this protein is Putative virulence-regulating protein PA2146.